A 340-amino-acid chain; its full sequence is Protein SSUH2 homolog (340 aa).

Acidic residues predominate over residues 1–11 (MDRDPSEEDSM). The segment at 1-20 (MDRDPSEEDSMADLSFEAES) is disordered.

In terms of tissue distribution, widely expressed, with highest levels in the liver, intestine, tongue and underjaw.

The protein localises to the cytoplasm. The protein resides in the nucleus. Its function is as follows. Plays a role in odontogenesis. This Mus musculus (Mouse) protein is Protein SSUH2 homolog.